The primary structure comprises 277 residues: Caspase-3 (277 aa).

Residue methionine 1 is modified to N-acetylmethionine. 2 consecutive propeptides follow at residues 1–9 (MENNETSVD) and 10–28 (SKSI…KSMD). At lysine 11 the chain carries N6-acetyllysine. The residue at position 26 (serine 26) is a Phosphoserine. Active-site residues include histidine 121 and cysteine 163. At cysteine 163 the chain carries S-nitrosocysteine; in inhibited form.

Belongs to the peptidase C14A family. In terms of assembly, heterotetramer that consists of two anti-parallel arranged heterodimers, each one formed by a 17 kDa (p17) and a 12 kDa (p12) subunit. Interacts with BIRC6/bruce. Cleavage by granzyme B, caspase-6, caspase-8 and caspase-10 generates the two active subunits. Additional processing of the propeptides is likely due to the autocatalytic activity of the activated protease. Active heterodimers between the small subunit of caspase-7 protease and the large subunit of caspase-3 also occur and vice versa. Post-translationally, S-nitrosylated on its catalytic site cysteine in unstimulated cell lines and denitrosylated upon activation of the Fas apoptotic pathway, associated with an increase in intracellular caspase activity. Fas therefore activates caspase-3 not only by inducing the cleavage of the caspase zymogen to its active subunits, but also by stimulating the denitrosylation of its active site thiol. In terms of processing, ubiquitinated by BIRC6; this activity is inhibited by DIABLO/SMAC.

It localises to the cytoplasm. It carries out the reaction Strict requirement for an Asp residue at positions P1 and P4. It has a preferred cleavage sequence of Asp-Xaa-Xaa-Asp-|- with a hydrophobic amino-acid residue at P2 and a hydrophilic amino-acid residue at P3, although Val or Ala are also accepted at this position.. With respect to regulation, inhibited by BIRC6; following inhibition of BIRC6-caspase binding by DIABLO/SMAC, BIRC6 is subjected to caspase cleavage, leading to an increase in active caspases. Functionally, involved in the activation cascade of caspases responsible for apoptosis execution. At the onset of apoptosis, it proteolytically cleaves poly(ADP-ribose) polymerase PARP1 at a '216-Asp-|-Gly-217' bond. Cleaves and activates sterol regulatory element binding proteins (SREBPs) between the basic helix-loop-helix leucine zipper domain and the membrane attachment domain. Cleaves and activates caspase-6, -7 and -9 (CASP6, CASP7 and CASP9, respectively). Cleaves and inactivates interleukin-18 (IL18). Triggers cell adhesion in sympathetic neurons through RET cleavage. Cleaves IL-1 beta between an Asp and an Ala, releasing the mature cytokine which is involved in a variety of inflammatory processes. Cleaves and inhibits serine/threonine-protein kinase AKT1 in response to oxidative stress. Acts as an inhibitor of type I interferon production during virus-induced apoptosis by mediating cleavage of antiviral proteins CGAS, IRF3 and MAVS, thereby preventing cytokine overproduction. Also involved in pyroptosis by mediating cleavage and activation of gasdermin-E (GSDME). Cleaves XRCC4 and phospholipid scramblase proteins XKR4, XKR8 and XKR9, leading to promote phosphatidylserine exposure on apoptotic cell surface. Cleaves BIRC6 following inhibition of BIRC6-caspase binding by DIABLO/SMAC. The sequence is that of Caspase-3 (CASP3) from Mesocricetus auratus (Golden hamster).